Reading from the N-terminus, the 845-residue chain is Lon protease (845 aa).

The Lon N-terminal domain maps to 45–242 (MPILALRNMI…RLLYLLHKEL (198 aa)). ATP is bound at residue 393-400 (GPPGVGKT). A Lon proteolytic domain is found at 629–811 (NGDAGVVIGL…NEVLKEALLE (183 aa)). Residues S717 and K760 contribute to the active site.

The protein belongs to the peptidase S16 family. In terms of assembly, homohexamer. Organized in a ring with a central cavity.

The protein resides in the cytoplasm. The enzyme catalyses Hydrolysis of proteins in presence of ATP.. Functionally, ATP-dependent serine protease that mediates the selective degradation of mutant and abnormal proteins as well as certain short-lived regulatory proteins. Required for cellular homeostasis and for survival from DNA damage and developmental changes induced by stress. Degrades polypeptides processively to yield small peptide fragments that are 5 to 10 amino acids long. Binds to DNA in a double-stranded, site-specific manner. This chain is Lon protease, found in Porphyromonas gingivalis (strain ATCC 33277 / DSM 20709 / CIP 103683 / JCM 12257 / NCTC 11834 / 2561).